The sequence spans 143 residues: Putative pre-16S rRNA nuclease (143 aa).

The protein belongs to the YqgF nuclease family.

The protein localises to the cytoplasm. Functionally, could be a nuclease involved in processing of the 5'-end of pre-16S rRNA. The sequence is that of Putative pre-16S rRNA nuclease from Marinobacter nauticus (strain ATCC 700491 / DSM 11845 / VT8) (Marinobacter aquaeolei).